The primary structure comprises 185 residues: Prorelaxin H1 (185 aa).

An N-terminal signal peptide occupies residues 1 to 22; it reads MPRLFLFHLLEFCLLLNQFSRA. Cystine bridges form between Cys-35–Cys-172, Cys-47–Cys-185, and Cys-171–Cys-176. A propeptide spans 56 to 158 (connecting peptide); it reads SLSQEDAPQT…KYLGLDTHSQ (103 aa).

Belongs to the insulin family. In terms of assembly, heterodimer of a B chain and an A chain linked by two disulfide bonds. Prostate. Not expressed in placenta, decidua or ovary.

It localises to the secreted. Functionally, relaxin is an ovarian hormone that acts with estrogen to produce dilatation of the birth canal in many mammals. May be involved in remodeling of connective tissues during pregnancy, promoting growth of pubic ligaments and ripening of the cervix. This Homo sapiens (Human) protein is Prorelaxin H1 (RLN1).